A 464-amino-acid polypeptide reads, in one-letter code: GDNF family receptor alpha-2 (464 aa).

The signal sequence occupies residues 1 to 21 (MILANAFCLFFFLDETLRSLA). 14 disulfide bridges follow: cysteine 40/cysteine 93, cysteine 47/cysteine 53, cysteine 63/cysteine 78, cysteine 95/cysteine 105, cysteine 161/cysteine 222, cysteine 168/cysteine 174, cysteine 185/cysteine 200, cysteine 195/cysteine 241, cysteine 224/cysteine 229, cysteine 251/cysteine 323, cysteine 258/cysteine 264, cysteine 275/cysteine 293, cysteine 285/cysteine 347, and cysteine 325/cysteine 335. N-linked (GlcNAc...) asparagine glycosylation occurs at asparagine 52. N-linked (GlcNAc...) asparagine glycosylation occurs at asparagine 357. Polar residues predominate over residues 360 to 374 (DVNLSPKSPPFQATQ). The segment at 360-392 (DVNLSPKSPPFQATQAPRVDKTPSLPDDLSDST) is disordered. Residues 381 to 392 (TPSLPDDLSDST) are compositionally biased toward low complexity. The N-linked (GlcNAc...) asparagine glycan is linked to asparagine 413. Asparagine 440 carries the GPI-anchor amidated asparagine lipid modification. Positions 441–464 (SGPRRTRPSAALTAASFLMLKLAL) are cleaved as a propeptide — removed in mature form.

It belongs to the GDNFR family. As to quaternary structure, interacts with NRTN ligand and RET: forms a 2:2:2 ternary complex composed of NRTN ligand, GFRA2 and RET receptor. Also forms a 4:4:4 tetrameric complex composed of 4 copies of NRTN ligand, GFRA2 and RET receptor, which prevents endocytosis of RET. Interacts with SORL1.

The protein localises to the cell membrane. In terms of biological role, receptor for neurturin (NRTN), a growth factor that supports the survival of sympathetic neurons. NRTN-binding leads to autophosphorylation and activation of the RET receptor. Also able to mediate GDNF signaling through the RET tyrosine kinase receptor. This chain is GDNF family receptor alpha-2 (GFRA2), found in Bos taurus (Bovine).